Here is a 133-residue protein sequence, read N- to C-terminus: Small ribosomal subunit protein uS8 (133 aa).

It belongs to the universal ribosomal protein uS8 family. Part of the 30S ribosomal subunit. Contacts proteins S5 and S12.

One of the primary rRNA binding proteins, it binds directly to 16S rRNA central domain where it helps coordinate assembly of the platform of the 30S subunit. In Rippkaea orientalis (strain PCC 8801 / RF-1) (Cyanothece sp. (strain PCC 8801)), this protein is Small ribosomal subunit protein uS8.